The sequence spans 945 residues: Soluble guanylate cyclase gcy-33 (945 aa).

Heme is bound at residue histidine 104. Residues 388–413 are a coiled coil; sequence SEVLTEMTREISEAKKTARTLLTQMM. Residues 437–567 enclose the Guanylate cyclase domain; it reads SIGFIRVCDF…DTVNTASRME (131 aa). Disordered regions lie at residues 639–679 and 706–930; these read KEAE…LSGS and QDEN…KCED. Positions 661-679 are enriched in low complexity; it reads SLGESIDSSSSRRGSLSGS. The segment covering 711–720 has biased composition (polar residues); that stretch reads RPPTWSASHS. Residues 721–731 are compositionally biased toward basic and acidic residues; it reads QDIRKPRKTES. The span at 732–744 shows a compositional bias: polar residues; that stretch reads KITLNSRLSSSDL. 2 stretches are compositionally biased toward basic and acidic residues: residues 750-759 and 766-804; these read ETSKDSDGET and ELKEVNRIREEALAQEKEEERTTKEENQKIEEVGEDHVS. Residues 763-802 are a coiled coil; the sequence is TSSELKEVNRIREEALAQEKEEERTTKEENQKIEEVGEDH. Residues 817–828 are compositionally biased toward polar residues; that stretch reads GDNNISFSQMPS. Over residues 851-861 the composition is skewed to basic and acidic residues; it reads ISKKKLEKEDS. The span at 862 to 884 shows a compositional bias: polar residues; the sequence is NSSMSSLDERTTVSAKPTTTRRL. Over residues 886-896 the composition is skewed to basic and acidic residues; the sequence is NQKDLEKEKKR. Residues 898 to 911 show a composition bias toward low complexity; sequence SMAGSSVTSSSAHS. Basic and acidic residues predominate over residues 916–930; that stretch reads SKKDTRDKSRCKCED.

The protein belongs to the adenylyl cyclase class-4/guanylyl cyclase family. Heterodimer; with other soluble guanylate cyclases. Heme serves as cofactor. Expressed in BAG sensory neuron.

Its subcellular location is the cytoplasm. It catalyses the reaction GTP = 3',5'-cyclic GMP + diphosphate. Its activity is regulated as follows. May be regulated by molecular oxygen. Probably not activated by nitric oxide (NO). In terms of biological role, synthesizes cyclic GMP (cGMP) from GTP. May be involved in sensitivity to quinine by regulating egl-4 activity through the production of cGMP. The chain is Soluble guanylate cyclase gcy-33 (gcy-33) from Caenorhabditis elegans.